Reading from the N-terminus, the 1040-residue chain is Multidrug resistance protein MdtB (1040 aa).

The next 12 membrane-spanning stretches (helical) occupy residues Leu-25–Ala-45, Leu-347–Ala-367, Ile-369–Leu-389, Leu-396–Ile-416, Ile-440–Phe-460, Phe-472–Pro-492, Trp-537–Ile-557, Leu-863–Val-883, Phe-888–Ala-908, Ile-910–Ile-930, Ile-968–Val-988, and Ile-998–Ile-1018.

This sequence belongs to the resistance-nodulation-cell division (RND) (TC 2.A.6) family. MdtB subfamily. Part of a tripartite efflux system composed of MdtA, MdtB and MdtC. MdtB forms a heteromultimer with MdtC.

The protein resides in the cell inner membrane. The polypeptide is Multidrug resistance protein MdtB (Salmonella choleraesuis (strain SC-B67)).